A 119-amino-acid polypeptide reads, in one-letter code: Ribosome-binding factor A (119 aa).

Belongs to the RbfA family. In terms of assembly, monomer. Binds 30S ribosomal subunits, but not 50S ribosomal subunits or 70S ribosomes.

It is found in the cytoplasm. Its function is as follows. One of several proteins that assist in the late maturation steps of the functional core of the 30S ribosomal subunit. Associates with free 30S ribosomal subunits (but not with 30S subunits that are part of 70S ribosomes or polysomes). Required for efficient processing of 16S rRNA. May interact with the 5'-terminal helix region of 16S rRNA. This Chlorobium limicola (strain DSM 245 / NBRC 103803 / 6330) protein is Ribosome-binding factor A.